Reading from the N-terminus, the 120-residue chain is Large ribosomal subunit protein uL18 (120 aa).

Over residues 1–10 (MSTPRKEQTQ) the composition is skewed to basic and acidic residues. The segment at 1–25 (MSTPRKEQTQKRHRRLRRHLEGTPE) is disordered.

The protein belongs to the universal ribosomal protein uL18 family. Part of the 50S ribosomal subunit; part of the 5S rRNA/L5/L18/L25 subcomplex. Contacts the 5S and 23S rRNAs.

Its function is as follows. This is one of the proteins that bind and probably mediate the attachment of the 5S RNA into the large ribosomal subunit, where it forms part of the central protuberance. This Synechococcus sp. (strain RCC307) protein is Large ribosomal subunit protein uL18.